The sequence spans 296 residues: ATP synthase gamma chain (296 aa).

This sequence belongs to the ATPase gamma chain family. In terms of assembly, F-type ATPases have 2 components, CF(1) - the catalytic core - and CF(0) - the membrane proton channel. CF(1) has five subunits: alpha(3), beta(3), gamma(1), delta(1), epsilon(1). CF(0) has three main subunits: a, b and c.

The protein localises to the cell membrane. In terms of biological role, produces ATP from ADP in the presence of a proton gradient across the membrane. The gamma chain is believed to be important in regulating ATPase activity and the flow of protons through the CF(0) complex. The protein is ATP synthase gamma chain of Pseudarthrobacter chlorophenolicus (strain ATCC 700700 / DSM 12829 / CIP 107037 / JCM 12360 / KCTC 9906 / NCIMB 13794 / A6) (Arthrobacter chlorophenolicus).